A 1265-amino-acid chain; its full sequence is Methionine synthase (1265 aa).

Residues 19–338 form the Hcy-binding domain; sequence QDEIEAILQE…DHIREIAEAV (320 aa). Cys-260, Cys-323, and Cys-324 together coordinate Zn(2+). The 262-residue stretch at 371–632 folds into the Pterin-binding domain; it reads FVNIGERCNV…IHKELLQLCE (262 aa). (6S)-5,6,7,8-tetrahydrofolate contacts are provided by residues 382 to 384, Asp-449, Asn-470, Asp-537, Asn-579, Arg-585, and Arg-591; that span reads GSR. In terms of domain architecture, B12-binding N-terminal spans 662–759; it reads QTDEWRNGPL…FMEKEREETK (98 aa). Methylcob(III)alamin contacts are provided by residues Glu-709, 782 to 786, His-785, Ser-830, Thr-834, and Ala-886; that span reads GDVHD. The B12-binding domain occupies 772–907; that stretch reads QGTIVLATVK…DENLKDEYFE (136 aa). In terms of domain architecture, AdoMet activation spans 923 to 1265; it reads SLKERRYLTL…LGPILGYDTD (343 aa). Residues Asp-974, Arg-1172, and 1227–1228 contribute to the S-adenosyl-L-methionine site; that span reads YF. Position 1264 is a phosphothreonine (Thr-1264).

The protein belongs to the vitamin-B12 dependent methionine synthase family. In terms of assembly, monomer. Dimer. Forms a multiprotein complex with MMACHC, MMADHC and MTRR. Methylcob(III)alamin is required as a cofactor. The cofactor is Zn(2+).

It localises to the cytoplasm. The enzyme catalyses (6S)-5-methyl-5,6,7,8-tetrahydrofolate + L-homocysteine = (6S)-5,6,7,8-tetrahydrofolate + L-methionine. It participates in amino-acid biosynthesis; L-methionine biosynthesis via de novo pathway; L-methionine from L-homocysteine (MetH route): step 1/1. Functionally, catalyzes the transfer of a methyl group from methylcob(III)alamin (MeCbl) to homocysteine, yielding enzyme-bound cob(I)alamin and methionine in the cytosol. MeCbl is an active form of cobalamin (vitamin B12) used as a cofactor for methionine biosynthesis. Cob(I)alamin form is regenerated to MeCbl by a transfer of a methyl group from 5-methyltetrahydrofolate. The processing of cobalamin in the cytosol occurs in a multiprotein complex composed of at least MMACHC, MMADHC, MTRR (methionine synthase reductase) and MTR which may contribute to shuttle safely and efficiently cobalamin towards MTR in order to produce methionine. The protein is Methionine synthase (MTR) of Bos taurus (Bovine).